The chain runs to 370 residues: Platelet-derived growth factor D (370 aa).

The first 23 residues, 1 to 23, serve as a signal peptide directing secretion; sequence MHRLILVSILVCANFCCYRDTFA. The region spanning 52-170 is the CUB domain; that stretch reads RDENIRVTGT…PGFKIYYSFV (119 aa). Cysteines 109 and 131 form a disulfide. N-linked (GlcNAc...) asparagine glycosylation is present at N276. Intrachain disulfides connect C302–C360 and C306–C362.

It belongs to the PDGF/VEGF growth factor family. Homodimer; disulfide-linked. Interacts with PDGFRB homodimers, and with heterodimers formed by PDGFRA and PDGFRB. Post-translationally, activated by proteolytic cleavage. Proteolytic removal of the N-terminal CUB domain releasing the core domain is necessary for unmasking the receptor-binding epitopes of the core domain. Cleavage after Arg-247 or Arg-249 by urokinase plasminogen activator gives rise to the active form. As to expression, widely expressed. Expressed at high levels in the kidney, adrenal glands, eye and CNS. In the kidney the localization is confined to arterial and arteriolar vascular smooth muscle cells and is also detected at low levels in the glomeruli In the eye in the anterior segment it is localized to the iris and ciliary body. In the retina localizes intensely to the outer plexiform layer, which contains photoreceptor axons and the synaptic layer between photoreceptors and second order neurons. In the spinal cord, prominently expressed in the motorneurons.

It is found in the secreted. In terms of biological role, growth factor that plays an essential role in the regulation of embryonic development, cell proliferation, cell migration, survival and chemotaxis. Potent mitogen for cells of mesenchymal origin. Plays an important role in wound healing. Induces macrophage recruitment, increased interstitial pressure, and blood vessel maturation during angiogenesis. May play an important role in control of lens epithelial cell proliferation. Can initiate events that lead to a mesangial proliferative glomerulonephritis, including influx of monocytes and macrophages and production of extracellular matrix. In Rattus norvegicus (Rat), this protein is Platelet-derived growth factor D (Pdgfd).